The chain runs to 359 residues: Peptide chain release factor 1 (359 aa).

At glutamine 236 the chain carries N5-methylglutamine.

This sequence belongs to the prokaryotic/mitochondrial release factor family. In terms of processing, methylated by PrmC. Methylation increases the termination efficiency of RF1.

It is found in the cytoplasm. Functionally, peptide chain release factor 1 directs the termination of translation in response to the peptide chain termination codons UAG and UAA. In Lacticaseibacillus casei (strain BL23) (Lactobacillus casei), this protein is Peptide chain release factor 1.